Consider the following 472-residue polypeptide: 3-isopropylmalate dehydratase large subunit (472 aa).

Residues 289 to 312 are disordered; the sequence is TWGTNPAQGTGVSQVVPSPDDAKD. A compositionally biased stretch (polar residues) spans 290 to 304; that stretch reads WGTNPAQGTGVSQVV. The [4Fe-4S] cluster site is built by Cys347, Cys407, and Cys410.

This sequence belongs to the aconitase/IPM isomerase family. LeuC type 1 subfamily. In terms of assembly, heterodimer of LeuC and LeuD. [4Fe-4S] cluster serves as cofactor.

It carries out the reaction (2R,3S)-3-isopropylmalate = (2S)-2-isopropylmalate. Its pathway is amino-acid biosynthesis; L-leucine biosynthesis; L-leucine from 3-methyl-2-oxobutanoate: step 2/4. Catalyzes the isomerization between 2-isopropylmalate and 3-isopropylmalate, via the formation of 2-isopropylmaleate. The protein is 3-isopropylmalate dehydratase large subunit of Halalkalibacterium halodurans (strain ATCC BAA-125 / DSM 18197 / FERM 7344 / JCM 9153 / C-125) (Bacillus halodurans).